The sequence spans 394 residues: MMHHCSITKPTFSISISTQKLHHHSSKFLNLGFRIRCESGDVSSPLRTKAVSLSSEMEDSSSLKKSLMELEGKKSEPYPGGMPKMGPFTGRDPNVKKPAWLRQKAPQGERFQEVKESLSRLNLNTVCEEAQCPNIGECWNGGGDGVATATIMVLGDTCTRGCRFCAVKTSRNPPPPDPMEPENTAKAIASWGVDYIVITSVDRDDIPDGGSGHFAQTVKAMKRHKPDIMIECLTSDFRGDLEAVDTLVHSGLDVFAHNVETVKRLQRLVRDPRAGYEQSMSVLKHAKISKPGMITKTSIMLGLGETDEELKEAMADLRAIDVDILTLGQYLQPTPLHLTVKEYVTPEKFDFWKTYGESIGFRYVASGPLVRSSYRAGELFVKTMVKESYSKSLS.

The transit peptide at 1-36 (MMHHCSITKPTFSISISTQKLHHHSSKFLNLGFRIR) directs the protein to the chloroplast. 7 residues coordinate [4Fe-4S] cluster: cysteine 127, cysteine 132, cysteine 138, cysteine 158, cysteine 162, cysteine 165, and serine 373. One can recognise a Radical SAM core domain in the interval 141-362 (GGGDGVATAT…KTYGESIGFR (222 aa)).

The protein belongs to the radical SAM superfamily. Lipoyl synthase family. [4Fe-4S] cluster is required as a cofactor. In terms of tissue distribution, expressed in roots, leaves and flowers.

It localises to the plastid. The protein resides in the chloroplast. The catalysed reaction is [[Fe-S] cluster scaffold protein carrying a second [4Fe-4S](2+) cluster] + N(6)-octanoyl-L-lysyl-[protein] + 2 oxidized [2Fe-2S]-[ferredoxin] + 2 S-adenosyl-L-methionine + 4 H(+) = [[Fe-S] cluster scaffold protein] + N(6)-[(R)-dihydrolipoyl]-L-lysyl-[protein] + 4 Fe(3+) + 2 hydrogen sulfide + 2 5'-deoxyadenosine + 2 L-methionine + 2 reduced [2Fe-2S]-[ferredoxin]. It functions in the pathway protein modification; protein lipoylation via endogenous pathway; protein N(6)-(lipoyl)lysine from octanoyl-[acyl-carrier-protein]: step 2/2. Catalyzes the radical-mediated insertion of two sulfur atoms into the C-6 and C-8 positions of the octanoyl moiety bound to the lipoyl domains of lipoate-dependent enzymes, thereby converting the octanoylated domains into lipoylated derivatives. Together with LIP2P and LIP2P2 is essential for de novo plastidial protein lipoylation during seed development. The protein is Lipoyl synthase, chloroplastic of Arabidopsis thaliana (Mouse-ear cress).